The primary structure comprises 72 residues: Disintegrin basilicin (72 aa).

The Disintegrin domain occupies 1-72 (AGEECDCGSP…ADCPRNHFHA (72 aa)). Intrachain disulfides connect Cys5–Cys20, Cys7–Cys15, Cys14–Cys37, Cys28–Cys34, Cys33–Cys58, and Cys46–Cys65. Residues 50–52 (RGD) carry the Cell attachment site motif.

It belongs to the venom metalloproteinase (M12B) family. P-II subfamily. P-IIa sub-subfamily. Monomer (disintegrin). Expressed by the venom gland.

It is found in the secreted. In terms of biological role, inhibits fibrinogen interaction with platelets. Acts by binding to alpha-IIb/beta-3 (ITGA2B/ITGB3) on the platelet surface and inhibits aggregation induced by ADP, thrombin, platelet-activating factor and collagen. In Crotalus basiliscus (Mexican west-coast rattlesnake), this protein is Disintegrin basilicin.